Here is a 3590-residue protein sequence, read N- to C-terminus: Filamentous hemagglutinin (3590 aa).

2 disordered regions span residues 3256–3309 (GGGS…VEVS) and 3417–3498 (APPP…GRHV). A compositionally biased stretch (pro residues) spans 3289–3299 (PSRPTTPPASP). Residues 3300-3309 (QPIRATVEVS) show a composition bias toward low complexity. Pro residues predominate over residues 3417-3432 (APPPVVETAQPLPPVK).

It is found in the cell surface. Its function is as follows. Evidence for a role in host-cell binding and infection. The chain is Filamentous hemagglutinin (fhaB) from Bordetella pertussis (strain Tohama I / ATCC BAA-589 / NCTC 13251).